A 276-amino-acid chain; its full sequence is Large ribosomal subunit protein uL2 (276 aa).

A disordered region spans residues 224–258 (VAMNPVDHPHGGGEGRTGEGRVPVSPWGTPTKGYR). A compositionally biased stretch (basic and acidic residues) spans 230–242 (DHPHGGGEGRTGE).

It belongs to the universal ribosomal protein uL2 family. In terms of assembly, part of the 50S ribosomal subunit. Forms a bridge to the 30S subunit in the 70S ribosome.

Its function is as follows. One of the primary rRNA binding proteins. Required for association of the 30S and 50S subunits to form the 70S ribosome, for tRNA binding and peptide bond formation. It has been suggested to have peptidyltransferase activity; this is somewhat controversial. Makes several contacts with the 16S rRNA in the 70S ribosome. The chain is Large ribosomal subunit protein uL2 from Polynucleobacter necessarius subsp. necessarius (strain STIR1).